The sequence spans 508 residues: MSVRRRTHSDDFSYLLEKTRRPSKLNVVQEDPKSAPPQGYSLTTVIIISVLVSLICQHFVPYAVSTLHTVIKNSPKQKSSPPPSNRLNIGFISGNSPEKYAPAVQKPTFLVDPIYDEKWKGIQTAVPVMSTQTDEKRENDPAKVKEAILAAKAAGRSRKDGNLERAMTIMEHAMALAPTNPQILIEMGQIREMHNELVEADQCYVKALAYDPGNSEALVLRARTTPLVSAIDRKMLRSVHDLRDEFNHLQHSTALRRMMRETYFLYVYHTVAIEGNTLSLGQTRAILESGMVIPGKSIREHNEVIGMDAALRFLNCSLLSKEHDEISIDDILEMHRRVLGNADPVEAGRIRTTQVYVGRFTPVSPEYVMEQLKDIVDWLNDESTLTIDPIERAAIAHYKLVLVHPFTDGNGRTARLLLNLIMMRSGFPPVILPVETRAEYYASLHVANLGDLRPFVRYVAKHSEASIQRYIGAMKTSSDNILNSGDSKLTPEESEVSEKIEAECRAGN.

Residues 44–64 traverse the membrane as a helical segment; it reads TVIIISVLVSLICQHFVPYAV. 2 TPR repeats span residues 147–180 and 181–214; these read AILA…APTN and PQIL…DPGN. The Inhibitory (S/T)XXXE(G/N) motif signature appears at 270–275; sequence TVAIEG. Glu274 is an ATP binding site. Positions 326 to 461 constitute a Fido domain; it reads ISIDDILEMH…LRPFVRYVAK (136 aa). Thr352 bears the O-AMP-threonine; by autocatalysis mark. 357-360 contributes to the ATP binding site; sequence VGRF. His404 is a catalytic residue. Residues 408 to 415, 440 to 441, and Asn448 contribute to the ATP site; these read DGNGRTAR and YY. Thr476 carries the O-AMP-threonine; by autocatalysis modification. Residues 482–508 are disordered; the sequence is LNSGDSKLTPEESEVSEKIEAECRAGN. Residues 496 to 508 show a composition bias toward basic and acidic residues; sequence VSEKIEAECRAGN.

Belongs to the fic family. In terms of assembly, forms homodimers; homodimerization might be required for adenylyltransferase activity. As to expression, ubiquitously expressed, with high expression in the germline.

The protein localises to the endoplasmic reticulum membrane. It is found in the nucleus membrane. It carries out the reaction L-tyrosyl-[protein] + ATP = O-(5'-adenylyl)-L-tyrosyl-[protein] + diphosphate. The catalysed reaction is L-threonyl-[protein] + ATP = 3-O-(5'-adenylyl)-L-threonyl-[protein] + diphosphate. It catalyses the reaction 3-O-(5'-adenylyl)-L-threonyl-[protein] + H2O = L-threonyl-[protein] + AMP + H(+). With respect to regulation, the side chain of Glu-274 determines which of the two opposing activities (AMPylase or de-AMPylase) will take place. In response to endoplasmic reticulum stress, mediates de-AMPylase activity. Adenylyltransferase activity is inhibited by the inhibitory helix present at the N-terminus: Glu-274 binds ATP and competes with ATP-binding at Arg-415, thereby preventing adenylyltransferase activity. In unstressed cells, disengagement of Glu-274 promotes adenylyltransferase activity. Activation dissociates ATP-binding from Glu-274, allowing ordered binding of the entire ATP moiety with the alpha-phosphate in an orientation that is productive for accepting an incoming target hydroxyl side chain. Protein that can both mediate the addition of adenosine 5'-monophosphate (AMP) to specific residues of target proteins (AMPylation), and the removal of the same modification from target proteins (de-AMPylation), depending on the context. The side chain of Glu-274 determines which of the two opposing activities (AMPylase or de-AMPylase) will take place. Adenylyltransferase that mediates the addition of adenosine 5'-monophosphate (AMP) to specific residues of target proteins. In vivo target proteins include the heat-shock 70 family proteins hsp-1 and hsp-3 and the translation elongation factors eef-1A, eef-1G and eef-2. Can AMPylate core histone H3 in vitro. Can also act as a phosphodiesterase by mediating removal of ATP (de-AMPylation) from target proteins. Decreases susceptibility to P.aeruginosa-mediated killing and might therefore play a role in the innate immune response. This chain is Protein adenylyltransferase fic-1, found in Caenorhabditis elegans.